A 177-amino-acid chain; its full sequence is Co-chaperone protein HscB homolog (177 aa).

Residues 8 to 80 (DYFSLFGMPR…LSRAQYLLEL (73 aa)) enclose the J domain.

It belongs to the HscB family. In terms of assembly, interacts with HscA and stimulates its ATPase activity.

In terms of biological role, co-chaperone involved in the maturation of iron-sulfur cluster-containing proteins. Seems to help targeting proteins to be folded toward HscA. The chain is Co-chaperone protein HscB homolog from Azoarcus sp. (strain BH72).